The chain runs to 208 residues: Protein-L-isoaspartate O-methyltransferase (208 aa).

S59 is a catalytic residue.

It belongs to the methyltransferase superfamily. L-isoaspartyl/D-aspartyl protein methyltransferase family.

It localises to the cytoplasm. It catalyses the reaction [protein]-L-isoaspartate + S-adenosyl-L-methionine = [protein]-L-isoaspartate alpha-methyl ester + S-adenosyl-L-homocysteine. Functionally, catalyzes the methyl esterification of L-isoaspartyl residues in peptides and proteins that result from spontaneous decomposition of normal L-aspartyl and L-asparaginyl residues. It plays a role in the repair and/or degradation of damaged proteins. The protein is Protein-L-isoaspartate O-methyltransferase of Vibrio atlanticus (strain LGP32) (Vibrio splendidus (strain Mel32)).